The primary structure comprises 223 residues: Transmembrane protein 114 (223 aa).

The helical transmembrane segment at 7–27 threads the bilayer; the sequence is GLAGAAALTGALSFVLLAAAI. 2 N-linked (GlcNAc...) asparagine glycosylation sites follow: asparagine 55 and asparagine 89. Transmembrane regions (helical) follow at residues 106-126, 134-154, and 189-209; these read FVIL…TGFL, LLLL…LAGI, and LALG…FLAA.

The protein belongs to the PMP-22/EMP/MP20 family.

Its subcellular location is the cell junction. The protein localises to the tight junction. The protein resides in the lateral cell membrane. It localises to the apical cell membrane. The protein is Transmembrane protein 114 of Homo sapiens (Human).